We begin with the raw amino-acid sequence, 291 residues long: MSDETLVNDPVNPEPARPASAAMAPPIVASPAKRIQAFTGDPDFMTSLARGLAVIQAFQERKRHLTIAQISHRTEIPRAAVRRCLHTLIKLGYATSDGRTYSLLPKVLTLGHAYLSSTPLAISAQPYLDRISDQLHEAANMATLEGDDILYIARSATVERLISVDLSVGGRLPAYCTSMGRILLAAMDDTSLREYLGRADLKARTSRTLHDPESLFACIQQVRAQGWCVVDQELEQGLRSIAVPIYDASGQVLAALNVSTHVGRVTRSELEQRFLPILLAASRDLCHQLFG.

The interval 1–22 (MSDETLVNDPVNPEPARPASAA) is disordered. Residues 45–105 (MTSLARGLAV…SDGRTYSLLP (61 aa)) enclose the HTH iclR-type domain. The H-T-H motif DNA-binding region spans 67-86 (IAQISHRTEIPRAAVRRCLH). The IclR-ED domain maps to 120–291 (LAISAQPYLD…SRDLCHQLFG (172 aa)).

Functionally, positive regulator of all genes within the pca regulon, pcaBDC, pcaIJ and pcaF. Also required for the chemotactic response to aromatic compounds. This is Pca regulon regulatory protein (pcaR) from Pseudomonas putida (Arthrobacter siderocapsulatus).